Consider the following 58-residue polypeptide: uncharacterized protein (58 aa).

The stretch at 3–52 (KVILEHLQRIEKQLEILNSKIENFLGFEELSEEELKELDEIEAKMEKGEK) forms a coiled coil.

This is an uncharacterized protein from Archaeoglobus fulgidus (strain ATCC 49558 / DSM 4304 / JCM 9628 / NBRC 100126 / VC-16).